A 322-amino-acid chain; its full sequence is Lipoyl synthase (322 aa).

Residues cysteine 61, cysteine 66, cysteine 72, cysteine 87, cysteine 91, cysteine 94, and serine 300 each contribute to the [4Fe-4S] cluster site. Positions 73–289 (WDKKHATFMI…ETVAYTKGFL (217 aa)) constitute a Radical SAM core domain.

It belongs to the radical SAM superfamily. Lipoyl synthase family. Requires [4Fe-4S] cluster as cofactor.

The protein resides in the cytoplasm. It catalyses the reaction [[Fe-S] cluster scaffold protein carrying a second [4Fe-4S](2+) cluster] + N(6)-octanoyl-L-lysyl-[protein] + 2 oxidized [2Fe-2S]-[ferredoxin] + 2 S-adenosyl-L-methionine + 4 H(+) = [[Fe-S] cluster scaffold protein] + N(6)-[(R)-dihydrolipoyl]-L-lysyl-[protein] + 4 Fe(3+) + 2 hydrogen sulfide + 2 5'-deoxyadenosine + 2 L-methionine + 2 reduced [2Fe-2S]-[ferredoxin]. Its pathway is protein modification; protein lipoylation via endogenous pathway; protein N(6)-(lipoyl)lysine from octanoyl-[acyl-carrier-protein]: step 2/2. Catalyzes the radical-mediated insertion of two sulfur atoms into the C-6 and C-8 positions of the octanoyl moiety bound to the lipoyl domains of lipoate-dependent enzymes, thereby converting the octanoylated domains into lipoylated derivatives. This Rhizobium meliloti (strain 1021) (Ensifer meliloti) protein is Lipoyl synthase.